Consider the following 543-residue polypeptide: Cytochrome P450 2U1 (543 aa).

4 consecutive transmembrane segments (helical) span residues 32 to 52 (PTGG…SWLW), 58 to 78 (GIPP…VLLP), 261 to 281 (VCLN…YLPF), and 342 to 362 (LFYI…NSLL). Cys490 contributes to the heme binding site. A helical transmembrane segment spans residues 495-515 (LAKMELFLMFVSLMQSFTFVL).

Belongs to the cytochrome P450 family. Requires heme as cofactor.

The protein localises to the endoplasmic reticulum membrane. Its subcellular location is the microsome membrane. The protein resides in the mitochondrion inner membrane. The catalysed reaction is an omega-methyl-long-chain fatty acid + reduced [NADPH--hemoprotein reductase] + O2 = an omega-hydroxy-long-chain fatty acid + oxidized [NADPH--hemoprotein reductase] + H2O + H(+). The enzyme catalyses (5Z,8Z,11Z,14Z)-eicosatetraenoate + reduced [NADPH--hemoprotein reductase] + O2 = 19-hydroxy-(5Z,8Z,11Z,14Z)-eicosatetraenoate + oxidized [NADPH--hemoprotein reductase] + H2O + H(+). It carries out the reaction (5Z,8Z,11Z,14Z)-eicosatetraenoate + reduced [NADPH--hemoprotein reductase] + O2 = 20-hydroxy-(5Z,8Z,11Z,14Z)-eicosatetraenoate + oxidized [NADPH--hemoprotein reductase] + H2O + H(+). It catalyses the reaction N-[(5Z,8Z,11Z,14Z)-eicosatetraenoyl]-serotonin + reduced [NADPH--hemoprotein reductase] + O2 = 2-oxo-N-[(5Z,8Z,11Z,14Z)-eicosatetraenoyl]-serotonin + oxidized [NADPH--hemoprotein reductase] + H2O + H(+). A cytochrome P450 monooxygenase involved in the metabolism of arachidonic acid and its conjugates. Mechanistically, uses molecular oxygen inserting one oxygen atom into a substrate, and reducing the second into a water molecule, with two electrons provided by NADPH via cytochrome P450 reductase (CPR; NADPH-ferrihemoprotein reductase). Acts as an omega and omega-1 hydroxylase for arachidonic acid and possibly for other long chain fatty acids. May modulate the arachidonic acid signaling pathway and play a role in other fatty acid signaling processes. May down-regulate the biological activities of N-arachidonoyl-serotonin, an endocannabinoid that has anti-nociceptive effects through inhibition of fatty acid amide hydrolase FAAH, TRPV1 receptor and T-type calcium channels. Catalyzes C-2 oxidation of the indole ring of N-arachidonoyl-serotonin forming a less active product 2-oxo-N-arachidonoyl-serotonin. This is Cytochrome P450 2U1 (CYP2U1) from Bos taurus (Bovine).